The primary structure comprises 1643 residues: Lysine-specific demethylase 6B (1643 aa).

4 disordered regions span residues 52–88, 190–680, 704–807, and 822–1096; these read GQPPLPAPLPPSHGSSSGHPSKPYYAPGAPTPRPLHG, AKRG…PLED, ESIR…LKSL, and GAAV…RSLS. 2 stretches are compositionally biased toward low complexity: residues 63-74 and 212-223; these read SHGSSSGHPSKP and AALSGPSGEEGL. Residue serine 224 is modified to Phosphoserine. Residues 242-266 are compositionally biased toward pro residues; sequence PGLPLPPPPLPPPPPPPPPPPPPLP. The span at 291–307 shows a compositional bias: basic and acidic residues; that stretch reads GPERKGSAPPERQEQRH. Over residues 332–342 the composition is skewed to pro residues; that stretch reads AAPPGPGPRPP. The span at 359 to 370 shows a compositional bias: basic and acidic residues; sequence DLRESRVQRSRM. The span at 394–412 shows a compositional bias: low complexity; that stretch reads PGTTTSSSSSSSSNTGLRG. Over residues 460–484 the composition is skewed to pro residues; sequence SLPPGPSSPPPPPCPRLLRPPPPPA. The span at 550 to 569 shows a compositional bias: low complexity; the sequence is TTSSSNSNSGSHSSSPAGPV. 2 stretches are compositionally biased toward pro residues: residues 584 to 600 and 641 to 658; these read LPRPPSPAQNPQDPPLV and GPGPPPGPLSKAPQPVPP. The span at 704 to 714 shows a compositional bias: basic and acidic residues; sequence ESIRKEEEQQQ. Residues 740 to 764 show a composition bias toward low complexity; sequence TAPTTTAPAVAVTTTTTTTTTTTAT. Over residues 772–800 the composition is skewed to pro residues; it reads PPALPPPPPLAKFPPPSQPQPPPPPPPSP. The span at 843–877 shows a compositional bias: low complexity; that stretch reads SGATALPPTSAAPSAQGSPQPSASSSSQFSTSGGP. Residues 889-904 are compositionally biased toward pro residues; that stretch reads VPGPMTPTQPPPPLSL. Positions 916-929 are enriched in basic and acidic residues; that stretch reads EISRACETLVERVG. Basic residues predominate over residues 972–989; it reads CKRRQKEHQKEHRRHRRA. A compositionally biased stretch (basic and acidic residues) spans 990 to 1003; sequence CKDSVGRRPREGRA. Basic residues predominate over residues 1004–1016; sequence KAKAKVPKEKSRR. A compositionally biased stretch (pro residues) spans 1047–1067; the sequence is PTAPAPPSAPAPSAQPTPPSA. A Glycyl lysine isopeptide (Lys-Gly) (interchain with G-Cter in SUMO2) cross-link involves residue lysine 1109. The tract at residues 1288–1325 is disordered; sequence FQESLQEEKESEDEESEEPDSTTGTPPSSAPDPKNHHI. Residues 1296–1307 are compositionally biased toward acidic residues; that stretch reads KESEDEESEEPD. The JmjC domain maps to 1339–1502; the sequence is RWKPQLQELL…YQLALERYEW (164 aa). Histidine 1390, glutamate 1392, and histidine 1470 together coordinate Fe cation. Zn(2+) contacts are provided by cysteine 1575, cysteine 1578, cysteine 1602, and cysteine 1605.

It belongs to the UTX family. As to quaternary structure, interacts with TLE1. Component of the MLL4 complex, at least composed of KMT2B/MLL4, ASH2L, RBBP5, WDR5, and KDM6B. Interacts with TBX21, SMARCA4, SMARCC1 and SMARCC2. L-ascorbate serves as cofactor. It depends on Fe(2+) as a cofactor.

Its subcellular location is the nucleus. The enzyme catalyses N(6),N(6),N(6)-trimethyl-L-lysyl(27)-[histone H3] + 2 2-oxoglutarate + 2 O2 = N(6)-methyl-L-lysyl(27)-[histone H3] + 2 formaldehyde + 2 succinate + 2 CO2. Its function is as follows. Histone demethylase that specifically demethylates 'Lys-27' of histone H3, thereby playing a central role in histone code. Demethylates trimethylated and dimethylated H3 'Lys-27'. Plays a central role in regulation of posterior development, by regulating HOX gene expression. Involved in inflammatory response by participating in macrophage differentiation in case of inflammation by regulating gene expression and macrophage differentiation. Plays a demethylase-independent role in chromatin remodeling to regulate T-box family member-dependent gene expression by acting as a link between T-box factors and the SMARCA4-containing SWI/SNF remodeling complex. This chain is Lysine-specific demethylase 6B (KDM6B), found in Homo sapiens (Human).